The sequence spans 248 residues: Methionine aminopeptidase 1 (248 aa).

His-77 lines the substrate pocket. A divalent metal cation is bound by residues Asp-94, Asp-105, and His-168. A substrate-binding site is contributed by His-175. 2 residues coordinate a divalent metal cation: Glu-201 and Glu-232.

In terms of assembly, monomer. The cofactor is Co(2+). Zn(2+) serves as cofactor. It depends on Mn(2+) as a cofactor. Requires Fe(2+) as cofactor.

The protein resides in the cytoplasm. It catalyses the reaction Release of N-terminal amino acids, preferentially methionine, from peptides and arylamides.. Removes the N-terminal methionine from nascent proteins. The N-terminal methionine is often cleaved when the second residue in the primary sequence is small and uncharged (Met-Ala-, Cys, Gly, Pro, Ser, Thr, or Val). Requires deformylation of the N(alpha)-formylated initiator methionine before it can be hydrolyzed. This Bacillus subtilis (strain 168) protein is Methionine aminopeptidase 1.